Consider the following 199-residue polypeptide: Recombination protein RecR (199 aa).

The C4-type zinc-finger motif lies at Cys-60–Cys-75. In terms of domain architecture, Toprim spans Ser-83 to Pro-178.

This sequence belongs to the RecR family.

In terms of biological role, may play a role in DNA repair. It seems to be involved in an RecBC-independent recombinational process of DNA repair. It may act with RecF and RecO. The chain is Recombination protein RecR from Paracidovorax citrulli (strain AAC00-1) (Acidovorax citrulli).